The chain runs to 445 residues: Argininosuccinate synthase (445 aa).

ATP is bound by residues A17–S25 and A43. Residue Y99 participates in L-citrulline binding. Residues G129 and T131 each coordinate ATP. 3 residues coordinate L-aspartate: T131, N135, and D136. N135 serves as a coordination point for L-citrulline. D136 contacts ATP. L-citrulline contacts are provided by R139 and S192. D194 contributes to the ATP binding site. Positions 201, 203, and 280 each coordinate L-citrulline.

Belongs to the argininosuccinate synthase family. Type 2 subfamily. As to quaternary structure, homotetramer.

It is found in the cytoplasm. It carries out the reaction L-citrulline + L-aspartate + ATP = 2-(N(omega)-L-arginino)succinate + AMP + diphosphate + H(+). Its pathway is amino-acid biosynthesis; L-arginine biosynthesis; L-arginine from L-ornithine and carbamoyl phosphate: step 2/3. The sequence is that of Argininosuccinate synthase from Bradyrhizobium sp. (strain BTAi1 / ATCC BAA-1182).